Consider the following 428-residue polypeptide: Tyrosine--tRNA ligase (428 aa).

Tyr41 provides a ligand contact to L-tyrosine. The short motif at 46–55 is the 'HIGH' region element; sequence PTADSLHLGH. N6-acetyllysine is present on Lys148. Residues Tyr179 and Gln183 each contribute to the L-tyrosine site. The 'KMSKS' region signature appears at 239–243; sequence KFGKT. Position 242 (Lys242) interacts with ATP. In terms of domain architecture, S4 RNA-binding spans 361-418; sequence ADLMQALVDSELQPSRGQARKTIASNAITINGEKQSDPEYFFKEEDRLFGRFTLLRRG.

This sequence belongs to the class-I aminoacyl-tRNA synthetase family. TyrS type 1 subfamily. Homodimer.

It is found in the cytoplasm. It carries out the reaction tRNA(Tyr) + L-tyrosine + ATP = L-tyrosyl-tRNA(Tyr) + AMP + diphosphate + H(+). Its function is as follows. Catalyzes the attachment of tyrosine to tRNA(Tyr) in a two-step reaction: tyrosine is first activated by ATP to form Tyr-AMP and then transferred to the acceptor end of tRNA(Tyr). The polypeptide is Tyrosine--tRNA ligase (Escherichia coli O1:K1 / APEC).